The following is a 223-amino-acid chain: RNA pyrophosphohydrolase (223 aa).

A Nudix hydrolase domain is found at 6–149; sequence GFRPNVGIIL…KRGVYEMALT (144 aa). The Nudix box signature appears at 38–59; the sequence is GGIDRGESPEQAMFRELHEEVG. The segment at 175 to 223 is disordered; sequence ERHMPDGGAPAGLDLPPGGSFDPHPDITSASDDPSPPPHNKAPFLPSQR. The span at 180-193 shows a compositional bias: low complexity; the sequence is DGGAPAGLDLPPGG.

The protein belongs to the Nudix hydrolase family. RppH subfamily. A divalent metal cation serves as cofactor.

Its function is as follows. Accelerates the degradation of transcripts by removing pyrophosphate from the 5'-end of triphosphorylated RNA, leading to a more labile monophosphorylated state that can stimulate subsequent ribonuclease cleavage. The protein is RNA pyrophosphohydrolase of Variovorax paradoxus (strain S110).